The following is a 141-amino-acid chain: UPF0225 protein Rmet_0111 (141 aa).

Belongs to the UPF0225 family.

This chain is UPF0225 protein Rmet_0111, found in Cupriavidus metallidurans (strain ATCC 43123 / DSM 2839 / NBRC 102507 / CH34) (Ralstonia metallidurans).